The chain runs to 743 residues: Sulfhydryl oxidase 1 (743 aa).

The signal sequence occupies residues 1–42 (MWRRRARSGGGGGGGGGGAAPRCRWWPAVLALLAAALPAARS). Residues 43-166 (RSLYSPSDPL…LRRAIITNLE (124 aa)) form the Thioredoxin domain. Catalysis depends on nucleophile residues cysteine 80 and cysteine 83. Cystine bridges form between cysteine 80–cysteine 83 and cysteine 111–cysteine 120. N-linked (GlcNAc...) asparagine glycosylation is found at asparagine 254, asparagine 288, asparagine 295, asparagine 371, and asparagine 401. The cysteines at positions 407 and 419 are disulfide-linked. The ERV/ALR sulfhydryl oxidase domain occupies 410–513 (SEPHFRGYPC…EDPQFPKLQW (104 aa)). FAD-binding positions include arginine 415, tryptophan 422, histidine 426, glutamate 461, histidine 465, 488–495 (WSHHNEVN), lysine 510, and tryptophan 513. Cysteine 459 and cysteine 462 are joined by a disulfide. A disulfide bridge links cysteine 519 with cysteine 522. A disordered region spans residues 567 to 617 (ASARLSTAGLREKEEEERKEEEEEGEKETEKPHREGETGRPGSSELRRPSI). Residues 580–593 (EEEERKEEEEEGEK) are compositionally biased toward acidic residues. The segment covering 594–604 (ETEKPHREGET) has biased composition (basic and acidic residues). The helical transmembrane segment at 707–727 (SLCIALYFLSSMCLLGMYTFF) threads the bilayer.

This sequence belongs to the quiescin-sulfhydryl oxidase (QSOX) family. FAD is required as a cofactor. Post-translationally, N-glycosylated. O-glycosylated on Thr and Ser residues.

It is found in the golgi apparatus membrane. It localises to the secreted. The enzyme catalyses 2 R'C(R)SH + O2 = R'C(R)S-S(R)CR' + H2O2. Catalyzes the oxidation of sulfhydryl groups in peptide and protein thiols to disulfides with the reduction of oxygen to hydrogen peroxide. Plays a role in disulfide bond formation in a variety of extracellular proteins. In fibroblasts, required for normal incorporation of laminin into the extracellular matrix, and thereby for normal cell-cell adhesion and cell migration. This Gallus gallus (Chicken) protein is Sulfhydryl oxidase 1 (QSOX1).